A 623-amino-acid polypeptide reads, in one-letter code: Chaperone protein HtpG (623 aa).

Positions 1–328 are a; substrate-binding; the sequence is MTQEKKKFDA…SEDLPLNISR (328 aa). The interval 329 to 544 is b; it reads ESLQHNSILD…ESAMDIRMER (216 aa). The segment at 545 to 623 is c; it reads FLIEQKQIAN…DIVQKAILSL (79 aa).

Belongs to the heat shock protein 90 family. Homodimer.

The protein resides in the cytoplasm. Molecular chaperone. Has ATPase activity. This Rickettsia canadensis (strain McKiel) protein is Chaperone protein HtpG.